We begin with the raw amino-acid sequence, 192 residues long: Xanthine phosphoribosyltransferase (192 aa).

Xanthine-binding residues include Leu20 and Asn27. 128 to 132 provides a ligand contact to 5-phospho-alpha-D-ribose 1-diphosphate; that stretch reads ANGDA. Residue Lys156 coordinates xanthine.

This sequence belongs to the purine/pyrimidine phosphoribosyltransferase family. Xpt subfamily. Homodimer.

It is found in the cytoplasm. It catalyses the reaction XMP + diphosphate = xanthine + 5-phospho-alpha-D-ribose 1-diphosphate. Its pathway is purine metabolism; XMP biosynthesis via salvage pathway; XMP from xanthine: step 1/1. Converts the preformed base xanthine, a product of nucleic acid breakdown, to xanthosine 5'-monophosphate (XMP), so it can be reused for RNA or DNA synthesis. This Staphylococcus aureus (strain MRSA252) protein is Xanthine phosphoribosyltransferase.